A 187-amino-acid polypeptide reads, in one-letter code: Oligoribonuclease (187 aa).

The Exonuclease domain occupies 7 to 170 (LCWLDMEMTG…DDILESIEEM (164 aa)). Residue Tyr128 is part of the active site.

Belongs to the oligoribonuclease family.

The protein localises to the cytoplasm. Its function is as follows. 3'-to-5' exoribonuclease specific for small oligoribonucleotides. The sequence is that of Oligoribonuclease from Neisseria meningitidis serogroup C / serotype 2a (strain ATCC 700532 / DSM 15464 / FAM18).